The chain runs to 254 residues: Phosphate import ATP-binding protein PstB (254 aa).

In terms of domain architecture, ABC transporter spans 9–249 (MSVKDLDLFY…PVDKRTEDYI (241 aa)). ATP is bound at residue 41–48 (GPSGCGKS).

Belongs to the ABC transporter superfamily. Phosphate importer (TC 3.A.1.7) family. As to quaternary structure, the complex is composed of two ATP-binding proteins (PstB), two transmembrane proteins (PstC and PstA) and a solute-binding protein (PstS).

The protein localises to the cell membrane. It catalyses the reaction phosphate(out) + ATP + H2O = ADP + 2 phosphate(in) + H(+). In terms of biological role, part of the ABC transporter complex PstSACB involved in phosphate import. Responsible for energy coupling to the transport system. The polypeptide is Phosphate import ATP-binding protein PstB (Clostridioides difficile (strain 630) (Peptoclostridium difficile)).